Consider the following 126-residue polypeptide: Major sperm protein 1 (126 aa).

Position 2 is an N-acetylalanine (Ala-2). One can recognise an MSP domain in the interval 8 to 125; that stretch reads DIATMPAQKV…RRKNLPIEYN (118 aa).

Sperm.

Its subcellular location is the cell projection. The protein localises to the pseudopodium. It is found in the cytoplasm. It localises to the cytoskeleton. Central component in molecular interactions underlying sperm crawling. Forms an extensive filament system that extends from sperm villipoda, along the leading edge of the pseudopod. In Globodera rostochiensis (Golden nematode worm), this protein is Major sperm protein 1 (MSP-1).